A 349-amino-acid chain; its full sequence is Phosphoribosylformylglycinamidine cyclo-ligase (349 aa).

This sequence belongs to the AIR synthase family.

The protein resides in the cytoplasm. The catalysed reaction is 2-formamido-N(1)-(5-O-phospho-beta-D-ribosyl)acetamidine + ATP = 5-amino-1-(5-phospho-beta-D-ribosyl)imidazole + ADP + phosphate + H(+). Its pathway is purine metabolism; IMP biosynthesis via de novo pathway; 5-amino-1-(5-phospho-D-ribosyl)imidazole from N(2)-formyl-N(1)-(5-phospho-D-ribosyl)glycinamide: step 2/2. This chain is Phosphoribosylformylglycinamidine cyclo-ligase, found in Psychrobacter cryohalolentis (strain ATCC BAA-1226 / DSM 17306 / VKM B-2378 / K5).